Consider the following 345-residue polypeptide: Neurotrimin (345 aa).

The N-terminal stretch at 1–30 is a signal peptide; that stretch reads MGVCGSLFLPWKCLVVVSLRLLFLVPTGVP. Ig-like C2-type domains are found at residues 39–126, 136–218, and 222–309; these read PKAM…PKTS, PKIV…VKVT, and PPYI…ASIT. 3 N-linked (GlcNAc...) asparagine glycosylation sites follow: Asn44, Asn70, and Asn152. Cys57 and Cys115 are joined by a disulfide. Disulfide bonds link Cys157–Cys201 and Cys243–Cys295. N-linked (GlcNAc...) asparagine glycans are attached at residues Asn284, Asn292, Asn305, and Asn321. Asn321 is lipidated: GPI-anchor amidated asparagine. Residues 322–345 constitute a propeptide, removed in mature form; sequence GTSSRRAGCLWLLPLLVLHLLLKF.

The protein belongs to the immunoglobulin superfamily. IgLON family.

It localises to the cell membrane. In terms of biological role, neural cell adhesion molecule. This Bos taurus (Bovine) protein is Neurotrimin (NTM).